The chain runs to 450 residues: UDP-N-acetylmuramoylalanine--D-glutamate ligase (450 aa).

119–125 (GSNGKTT) is a binding site for ATP.

It belongs to the MurCDEF family.

It localises to the cytoplasm. The catalysed reaction is UDP-N-acetyl-alpha-D-muramoyl-L-alanine + D-glutamate + ATP = UDP-N-acetyl-alpha-D-muramoyl-L-alanyl-D-glutamate + ADP + phosphate + H(+). It functions in the pathway cell wall biogenesis; peptidoglycan biosynthesis. Cell wall formation. Catalyzes the addition of glutamate to the nucleotide precursor UDP-N-acetylmuramoyl-L-alanine (UMA). In Streptococcus thermophilus (strain ATCC BAA-491 / LMD-9), this protein is UDP-N-acetylmuramoylalanine--D-glutamate ligase.